Reading from the N-terminus, the 597-residue chain is Dictomallein-3 (597 aa).

The N-terminal stretch at 1–19 is a signal peptide; sequence MKLILILIFLFSCILFINC. Residues 148–409 form the Peptidase M66 domain; it reads PDVGQDYTLK…QNYFKNSIYY (262 aa). Zn(2+) is bound at residue His301. The active site involves Glu302. Positions 305 and 311 each coordinate Zn(2+).

This sequence belongs to the dictomallein family. Zn(2+) is required as a cofactor.

The protein resides in the secreted. This Dictyostelium discoideum (Social amoeba) protein is Dictomallein-3 (dtmlC).